We begin with the raw amino-acid sequence, 323 residues long: Pantothenate kinase (323 aa).

Gly101–Ser108 provides a ligand contact to ATP.

The protein belongs to the prokaryotic pantothenate kinase family.

The protein localises to the cytoplasm. It catalyses the reaction (R)-pantothenate + ATP = (R)-4'-phosphopantothenate + ADP + H(+). It functions in the pathway cofactor biosynthesis; coenzyme A biosynthesis; CoA from (R)-pantothenate: step 1/5. The protein is Pantothenate kinase of Paenarthrobacter aurescens (strain TC1).